Consider the following 120-residue polypeptide: Ribonuclease P protein component (120 aa).

The protein belongs to the RnpA family. In terms of assembly, consists of a catalytic RNA component (M1 or rnpB) and a protein subunit.

It carries out the reaction Endonucleolytic cleavage of RNA, removing 5'-extranucleotides from tRNA precursor.. In terms of biological role, RNaseP catalyzes the removal of the 5'-leader sequence from pre-tRNA to produce the mature 5'-terminus. It can also cleave other RNA substrates such as 4.5S RNA. The protein component plays an auxiliary but essential role in vivo by binding to the 5'-leader sequence and broadening the substrate specificity of the ribozyme. This is Ribonuclease P protein component from Chlamydia trachomatis serovar L2 (strain ATCC VR-902B / DSM 19102 / 434/Bu).